Reading from the N-terminus, the 2327-residue chain is MNTLLWTILLPLLFSFCVCQQPEHQDLEMSVQYYDDNVIDLLEALNVTRSVKGVTKAKGSDPASPAWKFRQRVPHLTLPRDYSVYLLSTTQESLGLHFVAKQAKNNRGTLVAFLSPAATKIDGRPLLRLISDTHTDQLYFEYRTAQTMEPASLHFPGSSPFSGSQWARVALNVNTHKVTLFLDCEEPVVFGKEGAEEMLSLILPLDLEITFASTPSDKESKFLGYWQTAEISPTGFTRRPWHCENRSDSLPLPYSLSGERQMEDEEIQREPRAPDLSDTDHYQQQQSEVPAQLLAKDDRLQRLEEAVKGLTNMIDMIKSQNADLQARVIALESCECRRSTCVWEDKEYQDSETWKKDACNICVCVGGSVTCSVRKDWPQCLGCFHEGRNYNNKDIFSVGPCMSCICQSGEVSCTPKLCPPVTCSDPVTLPNECCPLCATGCSDGHKEGDTWRKDTCTTCTCQNGTISCEREQCPELTCLKRHTPPGQCCAKCQQGCEYEGLIYRNGDYFLSQSNPCVNCSCLNNLVRCLPVQCPLPACTNPVPIPGQCCPSCPVCELDGHPLIPGQNVTTKDGCRLCSCQDGKVQCTESVQCPHICTHGVRSNSCCLDCSACEMHGDIIPNGLTFQGNMDPCESCTCQDGNVHCVRVSCPELSCVLHEKIPGECCSQCQSCMDGTVKRKHGEEWKPQGDPCQSCRCLEGRVQCRKRHCAALCRNPLPPRPGTCCPMCDGCLYNGRSYLNGQPVRSTDQCNRCFCENGNVQCEPIACPQAPCRNPVRRTGECCPRCEGCEYDSRHFAEGVVFTTAHDPCLQCTCLSGEVSCEHLDRKCPPSQCSHPGKAAGQCCPSCDVCDFEGILYTDRQTFQPPGHGPCLKCFCTIGNVRCVEETCPPAPCPNPVRDPEQCCPVCKVCVQDGVEFLEGIEWELDGNPCSSCTCRNGDTVCGVSECPPVSCLHPTRREGECCPVCDSCSYNQRLYSNEQIFTDPDNPCQDCQCKDGTVQCSSIVCPPVLCTIPERTPGQCCAKCPDCRYQDQIFLEGEQFSNPLNQCQECWCRDGHVTCTDRGCTGALCSYPLPGTCCQNNCNGCNYAGKEYPNGADFPHPTDKCRQCHCINGNVQCLAQRCPPLLCAEPFPVPGECCPQCPVPPADCPYSGVTYRHMQRFYDPSDKCRDCICNNGTVTCQRKPCAPTPCLHPLQGDCCRSCDGCLMSGKELANGEQFPQPSDPCSVCVCWEGSVTCQPKTCPVLNCPFPAPGQCCKECQDCQYFGEVYLNGQEFSAPEDSCSRCVCADGFVTCSKKPCYKAGCTHPSTPPGKCCPVCDGCSYNGDALINSQSVPDPSNPLCSECTCRAGSVQCVRKLCGPTSCPHPVTGPCDCPICQGCHFQGHNYIDGEVFTSAQSQCEQCRCMRGHVTCGPRPCDQVTCPHPAEDPCMCPVCDGCNYSGRDCTNGESFPDPEDECSHCTCRNGEVACISVPCPRVSCMYPITPRGECCPRCTGICKHNGRVYQSGDTFHPPGDLCTKCSCQNEMVNCQRVRCSQECSHPVLSPASSCCPVCDRCFYENREYANHETFTSTSDPCQRCVCLDGSVTCTHVVCPYVSCANPITKPGQCCRECPVCRYQGKEFSEGAHWVPHTDPCLKCTCSNGHVDCEPPQCPPLPCTQQVTDPGTCCPRCRGCVYNGREYRDNSNWLSSSDHCMSCMCVDGVTTCSKLQCITSCTNQITIPGECCPVCADCISNSKVYLPGDSYNPSKDPCEICTCESLPNGQQYRHCTKKQCPSLLDCPRSYILPPAEGQCCSSCAQALSNCTNTLVGNEIQATDDPCYTCHCKDLTWVCVHQPCPALSCPRSEQFTHSGSCCPVCNECVVEIEGRRVPDGETWTDRQDPCVTCTCTLGHVECQIEECQPVQCQEGERKVKRPGTCCHECQASAVSCWYQGQRFLSNEHWQVDECTACTCVSGEVHCHSERCPQVSCTAEETPALIPGMCCPHCIPRPATCIAFGDPHYRTFDGKMYHFQGSCTYVLSEDCEGGDFSIHVTNDDRGLRGVSWTKEVTVLIGDAVVQLLQDWVVMVDYQTVELPFLKEPYIYIERKTNTILLNSNIGVKVQWNGRSHLEVSVPGTYRDHLCGLCGNFNNYPQDDLRDRRGQILMSEAAFGNSWRVQSSNDSSSSCWDGQDVDPCKQAGYRARKEANGRCKLLKSSVFEPCHRVVPPEMFFASCVYDLCACGAGDECLCDVLEAYASECREAGVILQWRSPALCAVGCPHDRGYVFDECGPPCPKTCFNKDVPLGVLESHCFKPCVPGCQCPAGLVEHESHCIPPESCPKIIHGNL.

The first 19 residues, 1 to 19 (MNTLLWTILLPLLFSFCVC), serve as a signal peptide directing secretion. Residues 250-294 (LPLPYSLSGERQMEDEEIQREPRAPDLSDTDHYQQQQSEVPAQLL) are disordered. The span at 268–281 (QREPRAPDLSDTDH) shows a compositional bias: basic and acidic residues. Residues 291 to 332 (AQLLAKDDRLQRLEEAVKGLTNMIDMIKSQNADLQARVIALE) are a coiled coil. 28 consecutive VWFC domains span residues 339-400 (STCV…SVGP), 401-438 (CMSC…PLCA), 439-493 (TGCS…AKCQ), 494-553 (QGCE…PSCP), 554-610 (VCEL…LDCS), 611-669 (ACEM…SQCQ), 670-728 (SCMD…PMCD), 729-786 (GCLY…PRCE), 787-847 (GCEY…PSCD), 848-907 (VCDF…PVCK), 908-966 (VCVQ…PVCD), 967-1025 (SCSY…AKCP), 1026-1083 (DCRY…NNCN), 1084-1142 (GCNY…PQCP), 1146-1203 (ADCP…RSCD), 1204-1260 (GCLM…KECQ), 1261-1319 (DCQY…PVCD), 1321-1377 (CSYN…CPIC), 1378-1439 (QGCH…DGCN), 1440-1495 (YSGR…PRCT), 1496-1555 (GICK…PVCD), 1556-1614 (RCFY…RECP), 1615-1673 (VCRY…PRCR), 1674-1731 (GCVY…PVCA), 1732-1799 (DCIS…SSCA), 1800-1860 (QALS…PVCN), 1861-1924 (ECVV…HECQ), and 1928-1988 (VSCW…PHCI). The region spanning 1992–2168 (ATCIAFGDPH…SSNDSSSSCW (177 aa)) is the VWFD domain. Disulfide bonds link Cys-1994–Cys-2126 and Cys-2016–Cys-2167. One can recognise a TIL domain in the interval 2259–2319 (CPHDRGYVFD…ESHCIPPESC (61 aa)).

The protein localises to the secreted. Its function is as follows. May be a signaling molecule that mediates inductive activities of the embryonic midline. Able to dorsalize mesoderm. The chain is Kielin/chordin-like protein (kcp) from Xenopus laevis (African clawed frog).